Here is a 1045-residue protein sequence, read N- to C-terminus: Elongation factor 3 (1045 aa).

7 HEAT repeats span residues 5–42, 43–85, 86–123, 125–162, 166–203, 205–241, and 242–279; these read DQSLKVLEELFKNLSVATADNRVEAAQEVASFLNGNII, EHDI…PSVE, PFVITLVPEICAKAGDKDKDVQAVASKTLVAISKAINP, AIKAYLPHLTKSLETTNKWQEKVSVLAAISALVDAAKE, LRMPELIPVLSETMWDTKKEVKEAATATMTKATETVDN, DIERFIPQLISCIADPKQVPETVHLLGATTFVAEVTP, and ATLSIMVPLLSRGLAERETSIKRKAAVIIDNMCKLVED. ADP is bound by residues Ile-42, His-44, and Ser-83. Residues Thr-392, His-396, and Glu-397 each contribute to the ADP site. ABC transporter domains lie at 426–641 and 667–993; these read DEGE…YYEL and VKVS…KKED. ADP is bound by residues Asn-703, Glu-922, Asn-925, and His-951. The segment at 974–1045 is disordered; it reads SGHNWVSGQG…AYVSSDDEDF (72 aa). The span at 1007-1031 shows a compositional bias: basic residues; sequence GGKKKKKLSSAELRKKKKERMKKKK.

Belongs to the ABC transporter superfamily. ABCF family. EF3 subfamily. As to quaternary structure, monomer.

The protein resides in the cytoplasm. Its subcellular location is the cytosol. It carries out the reaction ATP + H2O = ADP + phosphate + H(+). The protein operates within protein biosynthesis; polypeptide chain elongation. Ribosome-dependent ATPase that functions in cytoplasmic translation elongation. Required for the ATP-dependent release of deacylated tRNA from the ribosomal E-site during protein biosynthesis. Stimulates the eEF1A-dependent binding of aminoacyl-tRNA to the ribosomal A-site, which has reduced affinity for tRNA as long as the E-site is occupied. Assists translation termination by stimulating the release of nascent protein from the ribosome by release factors. In Candida glabrata (strain ATCC 2001 / BCRC 20586 / JCM 3761 / NBRC 0622 / NRRL Y-65 / CBS 138) (Yeast), this protein is Elongation factor 3 (TEF3).